Reading from the N-terminus, the 323-residue chain is CIMIP2 protein CG18335 (323 aa).

This sequence belongs to the CIMIP2 family.

It localises to the cytoplasm. It is found in the cytoskeleton. The protein localises to the cilium axoneme. Probable microtubule inner protein (MIP) part of the dynein-decorated doublet microtubules (DMTs) in cilium axoneme. This chain is CIMIP2 protein CG18335, found in Drosophila melanogaster (Fruit fly).